Here is a 186-residue protein sequence, read N- to C-terminus: Peptidyl-tRNA hydrolase (186 aa).

Y15 contributes to the tRNA binding site. H20 (proton acceptor) is an active-site residue. 3 residues coordinate tRNA: Y64, N66, and N112.

Belongs to the PTH family. In terms of assembly, monomer.

The protein localises to the cytoplasm. The catalysed reaction is an N-acyl-L-alpha-aminoacyl-tRNA + H2O = an N-acyl-L-amino acid + a tRNA + H(+). Its function is as follows. Hydrolyzes ribosome-free peptidyl-tRNAs (with 1 or more amino acids incorporated), which drop off the ribosome during protein synthesis, or as a result of ribosome stalling. Catalyzes the release of premature peptidyl moieties from peptidyl-tRNA molecules trapped in stalled 50S ribosomal subunits, and thus maintains levels of free tRNAs and 50S ribosomes. This Azobacteroides pseudotrichonymphae genomovar. CFP2 protein is Peptidyl-tRNA hydrolase.